The sequence spans 130 residues: Small ribosomal subunit protein uS9 (130 aa).

It belongs to the universal ribosomal protein uS9 family.

This Methylibium petroleiphilum (strain ATCC BAA-1232 / LMG 22953 / PM1) protein is Small ribosomal subunit protein uS9.